The chain runs to 111 residues: Thioredoxin 2 (111 aa).

The Thioredoxin domain maps to 2 to 109 (SKGVITITDA…LLSFLDTHLN (108 aa)). Cysteine 33 and cysteine 36 are disulfide-bonded.

The protein belongs to the thioredoxin family.

In terms of biological role, participates in various redox reactions through the reversible oxidation of its active center dithiol to a disulfide and catalyzes dithiol-disulfide exchange reactions. The chain is Thioredoxin 2 (trxB) from Nostoc sp. (strain PCC 7120 / SAG 25.82 / UTEX 2576).